A 492-amino-acid chain; its full sequence is UDP-N-acetylmuramoyl-L-alanyl-D-glutamate--2,6-diaminopimelate ligase (492 aa).

Ser-21 contributes to the UDP-N-acetyl-alpha-D-muramoyl-L-alanyl-D-glutamate binding site. 98-104 (GTNGKSS) provides a ligand contact to ATP. Residues 144–145 (TT), Ser-171, Gln-177, and Arg-179 each bind UDP-N-acetyl-alpha-D-muramoyl-L-alanyl-D-glutamate. Lys-211 bears the N6-carboxylysine mark. Meso-2,6-diaminopimelate is bound by residues Arg-372, 396–399 (DNPR), Gly-446, and Glu-450. The Meso-diaminopimelate recognition motif motif lies at 396 to 399 (DNPR).

This sequence belongs to the MurCDEF family. MurE subfamily. Mg(2+) serves as cofactor. In terms of processing, carboxylation is probably crucial for Mg(2+) binding and, consequently, for the gamma-phosphate positioning of ATP.

Its subcellular location is the cytoplasm. It carries out the reaction UDP-N-acetyl-alpha-D-muramoyl-L-alanyl-D-glutamate + meso-2,6-diaminopimelate + ATP = UDP-N-acetyl-alpha-D-muramoyl-L-alanyl-gamma-D-glutamyl-meso-2,6-diaminopimelate + ADP + phosphate + H(+). Its pathway is cell wall biogenesis; peptidoglycan biosynthesis. Functionally, catalyzes the addition of meso-diaminopimelic acid to the nucleotide precursor UDP-N-acetylmuramoyl-L-alanyl-D-glutamate (UMAG) in the biosynthesis of bacterial cell-wall peptidoglycan. The sequence is that of UDP-N-acetylmuramoyl-L-alanyl-D-glutamate--2,6-diaminopimelate ligase from Rickettsia typhi (strain ATCC VR-144 / Wilmington).